The primary structure comprises 817 residues: DNA mismatch repair protein MutS (817 aa).

604–611 is a binding site for ATP; sequence GPNMSGKS.

This sequence belongs to the DNA mismatch repair MutS family.

This protein is involved in the repair of mismatches in DNA. It is possible that it carries out the mismatch recognition step. This protein has a weak ATPase activity. The sequence is that of DNA mismatch repair protein MutS from Petrotoga mobilis (strain DSM 10674 / SJ95).